A 372-amino-acid chain; its full sequence is Biglycan (372 aa).

The signal sequence occupies residues 1–19 (MPTMWPLWLLASLLALSQA). Residues 20-40 (LPFEQKGFWDFTLDDGLPMLN) constitute a propeptide that is removed on maturation. 2 O-linked (Xyl...) (glycosaminoglycan) serine glycosylation sites follow: Ser45 and Ser51. 2 disulfide bridges follow: Cys67/Cys73 and Cys71/Cys80. LRR repeat units lie at residues 86–106 (KAVPKEISPDTTLLDLQNNEI), 107–130 (SELRKDDFKGLQHLYALVLVNNKI), 131–154 (SKIHEKAFSPLRKLQKLYISKNHL), 155–175 (VEIPPNLPSSLVELRIHDNRI), 176–199 (RKVPKGVFSGLRNMNCIEMGGNPL), 200–224 (ENSGFQPGAFDGLKLNYLRISEAKL), 225–245 (TGIPKDLPETLNELHLDHNKI), 246–269 (QAIELEDLLRYSKLYRLGLGHNQI), 270–293 (RMIENGSLSFLPTLRELHLDNNKL), 294–316 (SRVPAGLPDLKLLQVVYLHTNNI), 317–346 (TKVGVNDFCPVGFGVKRAYYNGISLFNNPV), and 347–372 (PYWEVQPATFRCVTDRLAIQFGNYKK). Residues Asn274 and Asn315 are each glycosylated (N-linked (GlcNAc...) asparagine). A disulfide bond links Cys325 and Cys358.

The protein belongs to the small leucine-rich proteoglycan (SLRP) family. SLRP class I subfamily. As to quaternary structure, homodimer. Forms a ternary complex with MFAP2 and ELN. In terms of processing, the two attached glycosaminoglycan chains can be either chondroitin sulfate or dermatan sulfate.

The protein resides in the secreted. It localises to the extracellular space. The protein localises to the extracellular matrix. In terms of biological role, may be involved in collagen fiber assembly. This chain is Biglycan (BGN), found in Equus caballus (Horse).